The chain runs to 151 residues: Small ribosomal subunit protein uS15 (151 aa).

It belongs to the universal ribosomal protein uS15 family.

In Zea mays (Maize), this protein is Small ribosomal subunit protein uS15 (RPS13).